The following is a 315-amino-acid chain: L-lactate dehydrogenase (315 aa).

NAD(+) contacts are provided by Val-12, Asp-33, and Tyr-65. Substrate is bound by residues Gln-82, Arg-88, and 120–123; that span reads NPVD. NAD(+) is bound by residues 118 to 120 and Ser-143; that span reads ISN. 148-151 contacts substrate; the sequence is DTSR. Positions 153 and 168 each coordinate beta-D-fructose 1,6-bisphosphate. Catalysis depends on His-175, which acts as the Proton acceptor. At Tyr-219 the chain carries Phosphotyrosine. Thr-228 provides a ligand contact to substrate.

The protein belongs to the LDH/MDH superfamily. LDH family. Homotetramer.

Its subcellular location is the cytoplasm. It carries out the reaction (S)-lactate + NAD(+) = pyruvate + NADH + H(+). It functions in the pathway fermentation; pyruvate fermentation to lactate; (S)-lactate from pyruvate: step 1/1. With respect to regulation, allosterically activated by fructose 1,6-bisphosphate (FBP). Catalyzes the conversion of lactate to pyruvate. This chain is L-lactate dehydrogenase, found in Mycoplasmopsis pulmonis (strain UAB CTIP) (Mycoplasma pulmonis).